A 504-amino-acid polypeptide reads, in one-letter code: Maturase K (504 aa).

The protein belongs to the intron maturase 2 family. MatK subfamily.

The protein localises to the plastid. It is found in the chloroplast. Its function is as follows. Usually encoded in the trnK tRNA gene intron. Probably assists in splicing its own and other chloroplast group II introns. This Aruncus dioicus (Goat's beard) protein is Maturase K.